A 122-amino-acid polypeptide reads, in one-letter code: uncharacterized protein (122 aa).

The next 3 membrane-spanning stretches (helical) occupy residues 33–53 (ALGL…LTIP), 58–78 (VLGV…LLRW), and 97–117 (PGYL…LVVA).

It to E.coli YidH.

The protein localises to the cell membrane. This is an uncharacterized protein from Mycobacterium tuberculosis (strain CDC 1551 / Oshkosh).